Consider the following 293-residue polypeptide: N-acetylneuraminate lyase (293 aa).

Residues serine 47 and threonine 48 each coordinate aceneuramate. The Proton donor role is filled by tyrosine 136. Lysine 164 acts as the Schiff-base intermediate with substrate in catalysis. 5 residues coordinate aceneuramate: threonine 166, glycine 188, aspartate 190, glutamate 191, and serine 207.

The protein belongs to the DapA family. NanA subfamily. Homotetramer.

The protein resides in the cytoplasm. The enzyme catalyses aceneuramate = aldehydo-N-acetyl-D-mannosamine + pyruvate. It functions in the pathway amino-sugar metabolism; N-acetylneuraminate degradation; D-fructose 6-phosphate from N-acetylneuraminate: step 1/5. Its function is as follows. Catalyzes the reversible aldol cleavage of N-acetylneuraminic acid (sialic acid; Neu5Ac) to form pyruvate and N-acetylmannosamine (ManNAc) via a Schiff base intermediate. In Haemophilus influenzae (strain ATCC 51907 / DSM 11121 / KW20 / Rd), this protein is N-acetylneuraminate lyase.